The chain runs to 180 residues: Insertion element IS1296 uncharacterized 21.4 kDa protein (180 aa).

It belongs to the IS150/IS1296 orfA family.

The polypeptide is Insertion element IS1296 uncharacterized 21.4 kDa protein (Mycoplasma mycoides subsp. mycoides SC).